The primary structure comprises 350 residues: Protein RecA (350 aa).

65–72 is a binding site for ATP; that stretch reads GPESSGKT. The interval 326-350 is disordered; that stretch reads HNLKTRNTADSKVTGAKDEKSKEEK. The span at 340 to 350 shows a compositional bias: basic and acidic residues; the sequence is GAKDEKSKEEK.

It belongs to the RecA family.

The protein resides in the cytoplasm. Its function is as follows. Can catalyze the hydrolysis of ATP in the presence of single-stranded DNA, the ATP-dependent uptake of single-stranded DNA by duplex DNA, and the ATP-dependent hybridization of homologous single-stranded DNAs. It interacts with LexA causing its activation and leading to its autocatalytic cleavage. This Clostridium novyi (strain NT) protein is Protein RecA.